A 90-amino-acid polypeptide reads, in one-letter code: UPF0298 protein YlbG (90 aa).

It belongs to the UPF0298 family.

The protein resides in the cytoplasm. The polypeptide is UPF0298 protein YlbG (ylbG) (Bacillus subtilis (strain 168)).